A 161-amino-acid polypeptide reads, in one-letter code: Cyclin-dependent protein kinase inhibitor SMR12 (161 aa).

Residues 84-93 (EEEEVVEEEN) are compositionally biased toward acidic residues. The disordered stretch occupies residues 84–106 (EEEEVVEEENDGFKTPTRPENRI).

Functionally, probable cyclin-dependent protein kinase (CDK) inhibitor that functions as a repressor of mitosis in the endoreduplication cell cycle. The sequence is that of Cyclin-dependent protein kinase inhibitor SMR12 from Arabidopsis thaliana (Mouse-ear cress).